Consider the following 246-residue polypeptide: 1-(5-phosphoribosyl)-5-[(5-phosphoribosylamino)methylideneamino] imidazole-4-carboxamide isomerase (246 aa).

D8 acts as the Proton acceptor in catalysis. Catalysis depends on D130, which acts as the Proton donor.

This sequence belongs to the HisA/HisF family.

The protein localises to the cytoplasm. The enzyme catalyses 1-(5-phospho-beta-D-ribosyl)-5-[(5-phospho-beta-D-ribosylamino)methylideneamino]imidazole-4-carboxamide = 5-[(5-phospho-1-deoxy-D-ribulos-1-ylimino)methylamino]-1-(5-phospho-beta-D-ribosyl)imidazole-4-carboxamide. The protein operates within amino-acid biosynthesis; L-histidine biosynthesis; L-histidine from 5-phospho-alpha-D-ribose 1-diphosphate: step 4/9. This chain is 1-(5-phosphoribosyl)-5-[(5-phosphoribosylamino)methylideneamino] imidazole-4-carboxamide isomerase, found in Alcanivorax borkumensis (strain ATCC 700651 / DSM 11573 / NCIMB 13689 / SK2).